The sequence spans 368 residues: Probable multidrug ABC transporter permease YbhR (368 aa).

At 1–24 (MFHRLWTLIRKELQSLLREPQTRA) the chain is on the cytoplasmic side. Residues 25-45 (ILILPVLIQVILFPFAATLEV) traverse the membrane as a helical segment. The Periplasmic portion of the chain corresponds to 46-173 (TNATIAIYDE…WYNPNLDYKW (128 aa)). The 238-residue stretch at 129–366 (AQIAANYLQQ…SAAYAMFRRK (238 aa)) folds into the ABC transmembrane type-2 domain. A helical transmembrane segment spans residues 174–194 (FVVPSLIAMITTIGVMIVTSL). Residues 195 to 222 (SVAREREQGTLDQLLVSPLTTWQIFIGK) are Cytoplasmic-facing. A helical transmembrane segment spans residues 223-243 (AVPALIVATFQATIVLAIGIW). Over 244 to 253 (AYQIPFAGSL) the chain is Periplasmic. Residues 254–274 (ALFYFTMVIYGLSLVGFGLLI) form a helical membrane-spanning segment. Residues 275–284 (SSLCSTQQQA) lie on the Cytoplasmic side of the membrane. The chain crosses the membrane as a helical span at residues 285–305 (FIGVFVFMMPAILLSGYVSPV). Residues 306–339 (ENMPVWLQNLTWINPIRHFTDITKQIYLKDASLD) lie on the Periplasmic side of the membrane. The helical transmembrane segment at 340 to 360 (IVWNSLWPLLVITATTGSAAY) threads the bilayer. The Cytoplasmic segment spans residues 361-368 (AMFRRKVM).

The protein belongs to the ABC-2 integral membrane protein family. In terms of assembly, the complex is probably composed of two ATP-binding proteins (YbhF) and two transmembrane proteins (YbhR and YbhS).

The protein localises to the cell inner membrane. Its function is as follows. Part of the ABC transporter complex YbhFSR that could be involved in efflux of cefoperazone. Probably involved in the translocation of the substrate across the membrane. This Escherichia coli O157:H7 protein is Probable multidrug ABC transporter permease YbhR (ybhR).